Reading from the N-terminus, the 157-residue chain is Protein Smg homolog (157 aa).

Belongs to the Smg family.

In Aeromonas salmonicida (strain A449), this protein is Protein Smg homolog.